The sequence spans 198 residues: Peptidyl-tRNA hydrolase (198 aa).

Tyrosine 17 is a tRNA binding site. Residue histidine 22 is the Proton acceptor of the active site. TRNA-binding residues include tyrosine 74, asparagine 76, and asparagine 122.

This sequence belongs to the PTH family. Monomer.

The protein localises to the cytoplasm. It catalyses the reaction an N-acyl-L-alpha-aminoacyl-tRNA + H2O = an N-acyl-L-amino acid + a tRNA + H(+). In terms of biological role, hydrolyzes ribosome-free peptidyl-tRNAs (with 1 or more amino acids incorporated), which drop off the ribosome during protein synthesis, or as a result of ribosome stalling. Its function is as follows. Catalyzes the release of premature peptidyl moieties from peptidyl-tRNA molecules trapped in stalled 50S ribosomal subunits, and thus maintains levels of free tRNAs and 50S ribosomes. The polypeptide is Peptidyl-tRNA hydrolase (Kineococcus radiotolerans (strain ATCC BAA-149 / DSM 14245 / SRS30216)).